The sequence spans 267 residues: Palmitoyltransferase ZDHHC12 (267 aa).

At 1–9 (MALWPPLNS) the chain is on the cytoplasmic side. The helical transmembrane segment at 10–30 (GMLVRTGHTVLTWGITLVLFL) threads the bilayer. Residues 31 to 43 (HDTELRQWEEQGE) are Lumenal-facing. Residues 44-64 (LLLPLTFLLLVLSSLLLYLAV) traverse the membrane as a helical segment. Residues 65-140 (SLMDPGYVTT…ENCVGERNHP (76 aa)) lie on the Cytoplasmic side of the membrane. A DHHC domain is found at 97–147 (RRCRHCLVLQPLRARHCRDCRRCVRRYDHHCPWMENCVGERNHPLFVAYLA). Residue Cys127 is the S-palmitoyl cysteine intermediate of the active site. A helical membrane pass occupies residues 141 to 161 (LFVAYLALQLVVLLWGLCLAW). The Lumenal segment spans residues 162-178 (SGLQFFQPWGLWLRSTG). Residues 179–199 (LLFTTFLLLSFFALVVALLLA) traverse the membrane as a helical segment. The Cytoplasmic portion of the chain corresponds to 200 to 267 (SHLYLVARNT…EEEEGSSQVV (68 aa)).

This sequence belongs to the DHHC palmitoyltransferase family.

The protein resides in the golgi apparatus membrane. The protein localises to the endoplasmic reticulum membrane. It carries out the reaction L-cysteinyl-[protein] + hexadecanoyl-CoA = S-hexadecanoyl-L-cysteinyl-[protein] + CoA. Its function is as follows. Palmitoyltransferase that catalyzes the addition of palmitate onto various protein substrates. Has a palmitoyltransferase activity toward gephyrin/GPHN, regulating its clustering at synapses and its function in gamma-aminobutyric acid receptor clustering. Thereby, indirectly regulates GABAergic synaptic transmission. Negatively regulates NLRP3-driven inflammation. Catalyzes NLRP3 palmitoylation, leading to its degradation via the chaperone-mediated autophagy (CMA) process. The protein is Palmitoyltransferase ZDHHC12 of Mus musculus (Mouse).